Here is a 300-residue protein sequence, read N- to C-terminus: Junctional adhesion molecule A (300 aa).

The first 26 residues, M1–G26, serve as a signal peptide directing secretion. The Extracellular portion of the chain corresponds to K27 to G238. 2 Ig-like V-type domains span residues G28–S122 and P134–D230. N-linked (GlcNAc...) asparagine glycosylation is present at N42. Intrachain disulfides connect C49-C108 and C152-C212. An N-linked (GlcNAc...) asparagine glycan is attached at N185. A helical transmembrane segment spans residues I239–F259. Over A260–L299 the chain is Cytoplasmic. Phosphoserine occurs at positions 282, 285, and 288.

The protein belongs to the immunoglobulin superfamily. As to quaternary structure, interacts with the ninth PDZ domain of MPDZ. Interacts with the first PDZ domain of PARD3. The association between PARD3 and PARD6B probably disrupts this interaction. Interacts with ITGAL (via I-domain). Interacts with CD151.

The protein resides in the cell junction. It is found in the tight junction. The protein localises to the cell membrane. Functionally, seems to play a role in epithelial tight junction formation. Appears early in primordial forms of cell junctions and recruits PARD3. The association of the PARD6-PARD3 complex may prevent the interaction of PARD3 with JAM1, thereby preventing tight junction assembly. Plays a role in regulating monocyte transmigration involved in integrity of epithelial barrier. Ligand for integrin alpha-L/beta-2 involved in memory T-cell and neutrophil transmigration. Involved in platelet activation. This Mus musculus (Mouse) protein is Junctional adhesion molecule A (F11r).